An 86-amino-acid chain; its full sequence is Large ribosomal subunit protein bL27 (86 aa).

The tract at residues 1–23 is disordered; it reads MAHKKGTGSTRNGRDSNSKRLGV.

This sequence belongs to the bacterial ribosomal protein bL27 family.

In Prochlorococcus marinus (strain MIT 9515), this protein is Large ribosomal subunit protein bL27.